Consider the following 321-residue polypeptide: Methyltransferase cfoB (321 aa).

This sequence belongs to the methyltransferase superfamily.

It participates in secondary metabolite biosynthesis; flavonoid biosynthesis. In terms of biological role, methyltransferase; part of the gene cluster that mediates the biosynthesis of chlorflavonin, a fungal flavonoid with acetolactate synthase inhibitory activity. Within the pathway, cfoB is responsible for the methylation at position C7-OH of flavonoid. The pathway begins with the PKS-NRPS hybrid synthetase cfoA that uses benzoic acid or p-hydroxybenzoic acid as a starter unit with four rounds of chain elongation using malonyl-CoA to form the chalcone skeleton. Then, a new type of chalcone isomerase, cfoK, catalyzes the conversion of the chalcone into a flavanone by a histidine-mediated oxa-Michael addition mechanism. The desaturation of flavanone to flavone is catalyzed by a new type of flavone synthase, the flavin mononucleotide (FMN)-dependent oxidoreductase cfoJ. Monooxygenases cfoF, cfoG, and P450 cfoH are responsible for the hydroxylation of the flavonoid skeleton at sites C3, C8, and C2', respectively. Like cfoF, the dehydratase cfoI also plays a role in the hydroxylation of position C3. Methyltransferases cfoB, cfoC, and cfoD then catalyze the methylation of C7-OH, C8-OH, and C3-OH, respectively. Finally, the monooxygenase cfoE is responsible for the chlorination of flavonoid at position C3'. The chain is Methyltransferase cfoB from Aspergillus candidus.